Here is a 709-residue protein sequence, read N- to C-terminus: MATTSLDLAKVRNIGIMAHIDAGKTTTTERILFYTGVSYKIGEVHDGAATMDWMEQEQERGITITSAATTCHWPLEDNDYTINIIDTPGHVDFTVEVERSLRVLDGAVTVFDGVAGVEPQSETVWRQADRYGVPRICFVNKLDRTGAEFHRCVDMIKDRLGAVPIIMQLPIGAEMDFKGVVDLVRMKALVWSAEAAKGEMYDVVDIPATHAEAAEEYRGKLVETVAENDDEIMELFLEGQEPTEEQLYAAIRRITIASGKGDGVTVTPVFCGTAFKNKGVQPLLDAVVRYLPTPLDVEAIEGHDVKDPEVVVKRKPSEDEPLSALAFKIMSDPHLGKLTFVRVYSGRLESGTAVLNSVKGKKERIGKIYRMHANKREEIEAVGAGDIVAVMGLKQTTTGETLSDDKNPVILESMDFPAPVIQVAIEPKSKGDQEKLGVAIQRLAEEDPSFQVHSDEETGQTIIGGMGELHLEVLVDRMRREFKVEANVGKPQVAYRETIRKTVERVDYTHKKQTGGTGQFAKVQIAIEPITETDGPAYEFVNKVTGGRIPREYIPSVDAGAQEAMQFGILAGYEMTGVRVTLLDGAYHEVDSSELAFKIAGSQAFKEAARKASPVLLEPMMAVEVTTPEESMGDVIGDLNSRRGQIQAMEERSGARVVKGLVPLSEMFGYVGDLRSKTSGRASYSMQFDSYAEVPRNVAEEIIAKAKGE.

The 287-residue stretch at 9-295 folds into the tr-type G domain; the sequence is AKVRNIGIMA…AVVRYLPTPL (287 aa). Residues 18–25, 86–90, and 140–143 each bind GTP; these read AHIDAGKT, DTPGH, and NKLD.

The protein belongs to the TRAFAC class translation factor GTPase superfamily. Classic translation factor GTPase family. EF-G/EF-2 subfamily.

The protein localises to the cytoplasm. In terms of biological role, catalyzes the GTP-dependent ribosomal translocation step during translation elongation. During this step, the ribosome changes from the pre-translocational (PRE) to the post-translocational (POST) state as the newly formed A-site-bound peptidyl-tRNA and P-site-bound deacylated tRNA move to the P and E sites, respectively. Catalyzes the coordinated movement of the two tRNA molecules, the mRNA and conformational changes in the ribosome. The chain is Elongation factor G from Streptomyces avermitilis (strain ATCC 31267 / DSM 46492 / JCM 5070 / NBRC 14893 / NCIMB 12804 / NRRL 8165 / MA-4680).